The primary structure comprises 238 residues: Urease subunit alpha (238 aa).

The segment at 1 to 102 (MKLTPKELDK…LVTVHTPIEA (102 aa)) is urease gamma. The tract at residues 103-238 (NGKLVPGELF…DDNYVKTIKE (136 aa)) is urease beta.

In the N-terminal section; belongs to the urease gamma subunit family. It in the C-terminal section; belongs to the urease beta subunit family. As to quaternary structure, heterohexamer of 3 UreA (alpha) and 3 UreB (beta) subunits. Four heterohexamers assemble to form a 16 nm dodecameric complex.

It carries out the reaction urea + 2 H2O + H(+) = hydrogencarbonate + 2 NH4(+). It functions in the pathway nitrogen metabolism; urea degradation; CO(2) and NH(3) from urea (urease route): step 1/1. This Helicobacter pylori (strain J99 / ATCC 700824) (Campylobacter pylori J99) protein is Urease subunit alpha.